Reading from the N-terminus, the 93-residue chain is UPF0147 protein MJ1419 (93 aa).

It belongs to the UPF0147 family.

The sequence is that of UPF0147 protein MJ1419 from Methanocaldococcus jannaschii (strain ATCC 43067 / DSM 2661 / JAL-1 / JCM 10045 / NBRC 100440) (Methanococcus jannaschii).